Consider the following 270-residue polypeptide: Triosephosphate isomerase (270 aa).

27–29 (NWK) contributes to the substrate binding site. Residue His-114 is the Electrophile of the active site. Glu-184 acts as the Proton acceptor in catalysis. Substrate contacts are provided by residues Gly-190, Ser-230, and 251–252 (GG).

It belongs to the triosephosphate isomerase family. As to quaternary structure, homodimer.

The protein localises to the cytoplasm. It carries out the reaction D-glyceraldehyde 3-phosphate = dihydroxyacetone phosphate. The protein operates within carbohydrate biosynthesis; gluconeogenesis. It participates in carbohydrate degradation; glycolysis; D-glyceraldehyde 3-phosphate from glycerone phosphate: step 1/1. Its function is as follows. Involved in the gluconeogenesis. Catalyzes stereospecifically the conversion of dihydroxyacetone phosphate (DHAP) to D-glyceraldehyde-3-phosphate (G3P). In Chlamydia muridarum (strain MoPn / Nigg), this protein is Triosephosphate isomerase.